Here is a 230-residue protein sequence, read N- to C-terminus: MGQKINPTGFRLAVTKDWASKWFAKSTDFSTVLKQDIDVRNYLRQKLANASVGRVVIERPAKSARITIHSARPGVVIGKKGEDIEVLKRDLQVLMGVPVHVNIEEIRRPELDAQIIADGIAQQLEKRVQFRRAMKRAMQNAMRSGAKGIKIMTSGRLNGADIARSEWYREGRVPLHTLRANVDYATSEAHTTYGVLGLKVWVYTEGNIKSSKPEHESKQRKAGRRNAAAN.

The region spanning 39–107 (VRNYLRQKLA…PVHVNIEEIR (69 aa)) is the KH type-2 domain. The disordered stretch occupies residues 210 to 230 (SSKPEHESKQRKAGRRNAAAN).

The protein belongs to the universal ribosomal protein uS3 family. As to quaternary structure, part of the 30S ribosomal subunit. Forms a tight complex with proteins S10 and S14.

Binds the lower part of the 30S subunit head. Binds mRNA in the 70S ribosome, positioning it for translation. The chain is Small ribosomal subunit protein uS3 from Neisseria meningitidis serogroup C (strain 053442).